The chain runs to 782 residues: MRRSLAPSQRGGQRLSSRNDFTPPLLKKNKRACQQDLEQERLRQSALRDATNTSDLPLPIRFTANTEYEMAIAKVLARKFKVPIDNYVPDYGGNRTLGVRRRIVRRPLHDPLACNALVLYHAPNYTDHERMSMEPSSVLVHVVVDPLLSNILRPHQREGVRFMYECVEGKRGNFNGCIMADEMGLGKTLQCVALVWTLLKQSAECKPTINKCIIVSPSSLVKNWEKEFTKWLHGRMHCLAMEGGSKENTVRALEQFSMNASTRLGTPVLLISYETFRIYAEILCKYEVGMVICDEGHRLKNSDNLTYQALMGLKTKRRVLLSGTPIQNDLTEYFSLVNFVNPEMLGTAADFKRNFENCILRGQNADSTDKERDRALEKTQELIKLVDQCIIRRTNQILTKYLPVKFEMVICAKLTPIQLQLYTNFLKSDQVRRSLADCKEKASLTALADITTLKKLCSHPNLICEKIAAEEKGFENSQNILPINYNPKGEINPELSGKFKLLDFMLAAIRAHGNDKVVLISNYTQTLDLFEQLARKRKYGFVRLDGTMSIKKRSKVVDRFNDPESDCFLFMLSSKAGGCGLNLIGANRLFMFDPDWNPANDEQAMARVWRDGQKKPCYIYRLVASGSIEEKILQRQTHKKSLSSTIIDNNESAEKHFTRDDLKDLFSFDPDILSDTHDKLKCKRCVQNVQMKPPPDDTDCTSHLSQWYHCSNNRGLPDNILAQAWTDSKCVSFVFHHRSQSQKIETTPATETSVEAKPEPERRKRPAMPLSDDSADEDFQGF.

Positions 1 to 20 (MRRSLAPSQRGGQRLSSRND) are enriched in polar residues. The segment at 1–28 (MRRSLAPSQRGGQRLSSRNDFTPPLLKK) is disordered. The tract at residues 2–9 (RRSLAPSQ) is required for chromatin remodeling, strand pairing activities and coupling of ATPase activity. Phosphothreonine is present on Thr-22. One can recognise a Helicase ATP-binding domain in the interval 168-343 (EGKRGNFNGC…FSLVNFVNPE (176 aa)). 181–188 (DEMGLGKT) contributes to the ATP binding site. A DEGH box motif is present at residues 294-297 (DEGH). Residues 501 to 658 (LLDFMLAAIR…NNESAEKHFT (158 aa)) form the Helicase C-terminal domain. The span at 741-753 (SQKIETTPATETS) shows a compositional bias: polar residues. The tract at residues 741-782 (SQKIETTPATETSVEAKPEPERRKRPAMPLSDDSADEDFQGF) is disordered. Residues 773–782 (DSADEDFQGF) show a composition bias toward acidic residues.

This sequence belongs to the SNF2/RAD54 helicase family. As to quaternary structure, interacts (via N-terminus) with spn-A/Rad51.

It is found in the nucleus. Its function is as follows. Involved in mitotic DNA repair and meiotic recombination. Functions in the recombinational DNA repair pathway. Essential for interhomolog gene conversion (GC), but may have a less important role in intersister GC than spn-A/Rad51. In the presence of DNA, spn-A/Rad51 enhances the ATPase activity of okr/Rad54. This is DNA repair and recombination protein RAD54-like from Drosophila pseudoobscura pseudoobscura (Fruit fly).